Here is a 416-residue protein sequence, read N- to C-terminus: Thioredoxin domain-containing protein 5 homolog (416 aa).

An N-terminal signal peptide occupies residues 1–25 (MLTRSILSVAVCGLLLSPLLPITRA). Thioredoxin domains lie at 26 to 145 (SQEE…KELS), 150 to 272 (ADLG…KMVG), and 293 to 412 (AGEE…KFLG). 3 disulfides stabilise this stretch: Cys-65-Cys-68, Cys-194-Cys-197, and Cys-331-Cys-334. Positions 413–416 (HDEL) match the Prevents secretion from ER motif.

It belongs to the protein disulfide isomerase family.

The protein localises to the endoplasmic reticulum. It localises to the cell surface. Possesses thioredoxin activity. Acts as a ligand for Drpr and is required for the phagocytosis of apoptotic cells. Binds to the extracellular region of Drpr and augments Drpr tyrosine phosphorylation. The polypeptide is Thioredoxin domain-containing protein 5 homolog (Drosophila melanogaster (Fruit fly)).